The following is a 383-amino-acid chain: L-lactate dehydrogenase (383 aa).

In terms of domain architecture, FMN hydroxy acid dehydrogenase spans 1-380 (MIVSSTTDFR…NETILAERVP (380 aa)). Y24 contacts substrate. FMN is bound by residues S106 and Q127. A substrate-binding site is contributed by Y129. T155 contributes to the FMN binding site. A substrate-binding site is contributed by R164. Position 251 (K251) interacts with FMN. H275 (proton acceptor) is an active-site residue. R278 is a substrate binding site. Residue 306-330 (DGGVRSGLDVVRMLALGARGVLIGR) coordinates FMN.

The protein belongs to the FMN-dependent alpha-hydroxy acid dehydrogenase family. Requires FMN as cofactor.

The protein localises to the cell inner membrane. The enzyme catalyses (S)-lactate + A = pyruvate + AH2. Its function is as follows. Catalyzes the conversion of L-lactate to pyruvate. Is coupled to the respiratory chain. This Caulobacter vibrioides (strain ATCC 19089 / CIP 103742 / CB 15) (Caulobacter crescentus) protein is L-lactate dehydrogenase.